Consider the following 464-residue polypeptide: GTPase Der (464 aa).

2 EngA-type G domains span residues 5–169 and 190–368; these read PTIA…KQKG and IKVA…RESH. GTP is bound by residues 11 to 18, 58 to 62, 121 to 124, 196 to 203, 243 to 247, and 308 to 311; these read GRPNVGKS, DTGGI, NKAD, GRPNAGKS, DTAGM, and NKFD. Residues 369–461 enclose the KH-like domain; the sequence is NLPTTGQLNR…PVIFSARSRV (93 aa).

Belongs to the TRAFAC class TrmE-Era-EngA-EngB-Septin-like GTPase superfamily. EngA (Der) GTPase family. In terms of assembly, associates with the 50S ribosomal subunit.

Its function is as follows. GTPase that plays an essential role in the late steps of ribosome biogenesis. This chain is GTPase Der, found in Akkermansia muciniphila (strain ATCC BAA-835 / DSM 22959 / JCM 33894 / BCRC 81048 / CCUG 64013 / CIP 107961 / Muc).